A 249-amino-acid chain; its full sequence is 3-deoxy-D-manno-octulosonic acid kinase (249 aa).

Asp175 is a catalytic residue.

Belongs to the protein kinase superfamily. KdkA/RfaP family.

It is found in the cell inner membrane. It catalyses the reaction an alpha-Kdo-(2-&gt;6)-lipid IVA + ATP = a 4-O-phospho-alpha-Kdo-(2-&gt;6)-lipid IVA + ADP + H(+). It participates in bacterial outer membrane biogenesis; LPS core biosynthesis. In terms of biological role, catalyzes the ATP-dependent phosphorylation of the 3-deoxy-D-manno-octulosonic acid (Kdo) residue in Kdo-lipid IV(A) at the 4-OH position. This chain is 3-deoxy-D-manno-octulosonic acid kinase, found in Stenotrophomonas maltophilia (strain R551-3).